Here is a 780-residue protein sequence, read N- to C-terminus: GATOR2 complex protein WDR24 (780 aa).

6 WD repeats span residues 67–107 (SLNF…RNKQ), 113–153 (EHKR…SVST), 156–196 (GQSE…RCER), 200–240 (AHNG…AKEI), 244–286 (QTIA…IPFA), and 290–333 (EHKD…IDRA). The segment at 708-730 (NCSNCKRPMSNKGWICDRCRQCA) adopts a C4-type zinc-finger fold. Zn(2+)-binding residues include Cys709, Cys712, Cys723, Cys726, Cys733, Cys736, Cys747, Cys750, His752, His755, His758, Cys769, Cys773, His775, and Cys777. An RING-type; atypical zinc finger spans residues 731-780 (SMCAVCHHVVKGLFVWCQGCCHGGHLQHIMNWMQNNCYCPAGCGHVCEYS).

Belongs to the WD repeat WDR24 family. In terms of assembly, component of the GATOR2 subcomplex, composed of MIOS, SEC13, SEH1L, WDR24 and WDR59. The GATOR2 complex interacts with CASTOR1 and CASTOR2; the interaction is negatively regulated by arginine. The GATOR2 complex interacts with SESN1, SESN2 and SESN3; the interaction is negatively regulated by amino acids.

It is found in the lysosome membrane. The catalysed reaction is S-ubiquitinyl-[E2 ubiquitin-conjugating enzyme]-L-cysteine + [acceptor protein]-L-lysine = [E2 ubiquitin-conjugating enzyme]-L-cysteine + N(6)-ubiquitinyl-[acceptor protein]-L-lysine.. It functions in the pathway protein modification; protein ubiquitination. The GATOR2 complex is negatively regulated by the upstream amino acid sensors CASTOR1 and SESN2, which sequester the GATOR2 complex in absence of amino acids. In the presence of abundant amino acids, GATOR2 is released from CASTOR1 and SESN2 and activated. Catalytic component of the GATOR2 complex, a multiprotein complex that acts as an activator of the amino acid-sensing branch of the mTORC1 signaling pathway. The GATOR2 complex indirectly activates mTORC1 through the inhibition of the GATOR1 subcomplex. GATOR2 probably acts as an E3 ubiquitin-protein ligase toward GATOR1. In the presence of abundant amino acids, the GATOR2 complex mediates ubiquitination of the NPRL2 core component of the GATOR1 complex, leading to GATOR1 inactivation. In the absence of amino acids, GATOR2 is inhibited, activating the GATOR1 complex. In addition to its role in regulation of the mTORC1 complex, promotes the acidification of lysosomes and facilitates autophagic flux. Within the GATOR2 complex, WDR24 constitutes the catalytic subunit that mediates 'Lys-6'-linked ubiquitination of NPRL2. This Xenopus laevis (African clawed frog) protein is GATOR2 complex protein WDR24.